The primary structure comprises 421 residues: Probable indole-3-pyruvate monooxygenase YUCCA9 (421 aa).

29 to 34 (GAGPSG) provides a ligand contact to FAD. 196–201 (GCGNSG) lines the NADP(+) pocket.

The protein belongs to the FMO family. FAD is required as a cofactor.

It catalyses the reaction indole-3-pyruvate + NADPH + O2 + H(+) = (indol-3-yl)acetate + CO2 + NADP(+) + H2O. The protein operates within plant hormone metabolism; auxin biosynthesis. In terms of biological role, involved in auxin biosynthesis. Belongs to the set of redundant YUCCA genes probably responsible for auxin biosynthesis in roots. The protein is Probable indole-3-pyruvate monooxygenase YUCCA9 (YUC9) of Arabidopsis thaliana (Mouse-ear cress).